The chain runs to 330 residues: Heat-inducible transcription repressor HrcA (330 aa).

It belongs to the HrcA family.

Its function is as follows. Negative regulator of class I heat shock genes (grpE-dnaK-dnaJ and groELS operons). Prevents heat-shock induction of these operons. The polypeptide is Heat-inducible transcription repressor HrcA (Synechococcus sp. (strain RCC307)).